A 615-amino-acid polypeptide reads, in one-letter code: uncharacterized protein (615 aa).

The protein belongs to the NodU/CmcH family.

This is an uncharacterized protein from Synechocystis sp. (strain ATCC 27184 / PCC 6803 / Kazusa).